A 369-amino-acid polypeptide reads, in one-letter code: Queuine tRNA-ribosyltransferase (369 aa).

D89 acts as the Proton acceptor in catalysis. Substrate-binding positions include 89–93 (DSGGF), D142, Q184, and G211. An RNA binding region spans residues 242–248 (GGGSPEL). D261 (nucleophile) is an active-site residue. Residues 266 to 270 (TRIAR) are RNA binding; important for wobble base 34 recognition. Zn(2+) contacts are provided by C299, C301, C304, and H330.

It belongs to the queuine tRNA-ribosyltransferase family. Homodimer. Within each dimer, one monomer is responsible for RNA recognition and catalysis, while the other monomer binds to the replacement base PreQ1. It depends on Zn(2+) as a cofactor.

The enzyme catalyses 7-aminomethyl-7-carbaguanine + guanosine(34) in tRNA = 7-aminomethyl-7-carbaguanosine(34) in tRNA + guanine. It functions in the pathway tRNA modification; tRNA-queuosine biosynthesis. In terms of biological role, catalyzes the base-exchange of a guanine (G) residue with the queuine precursor 7-aminomethyl-7-deazaguanine (PreQ1) at position 34 (anticodon wobble position) in tRNAs with GU(N) anticodons (tRNA-Asp, -Asn, -His and -Tyr). Catalysis occurs through a double-displacement mechanism. The nucleophile active site attacks the C1' of nucleotide 34 to detach the guanine base from the RNA, forming a covalent enzyme-RNA intermediate. The proton acceptor active site deprotonates the incoming PreQ1, allowing a nucleophilic attack on the C1' of the ribose to form the product. After dissociation, two additional enzymatic reactions on the tRNA convert PreQ1 to queuine (Q), resulting in the hypermodified nucleoside queuosine (7-(((4,5-cis-dihydroxy-2-cyclopenten-1-yl)amino)methyl)-7-deazaguanosine). This chain is Queuine tRNA-ribosyltransferase, found in Thermotoga sp. (strain RQ2).